Reading from the N-terminus, the 253-residue chain is Chloride intracellular channel protein 4 (253 aa).

Position 2 is an N-acetylalanine (alanine 2). Residues 2–101 (ALSMPLNGLK…EEFLEEVLCP (100 aa)) form a required for insertion into the membrane region. Serine 4 carries the phosphoserine modification. Position 24 is an N6-acetyllysine (lysine 24). Residues 35–38 (CPFS) carry the G-site motif. The chain crosses the membrane as a helical span at residues 37-57 (FSQRLFMILWLKGVVFSVTTV). One can recognise a GST C-terminal domain in the interval 81-244 (NSEVKTDVNK…PSDKEVEIAY (164 aa)). Lysine 130 carries the N6-acetyllysine modification. A phosphoserine mark is found at serine 132, serine 167, and serine 236. The residue at position 244 (tyrosine 244) is a Phosphotyrosine.

This sequence belongs to the chloride channel CLIC family. As to quaternary structure, monomer. Interacts with HRH3. Detected in brain, in cell bodies and dendrites of Purkinje cells in cerebellar neurons (at protein level). Expressed neonatal and adult cardiomyocytes (at protein level). Marked expression was found in hippocampus and cerebellum, and in many other tissues.

The protein resides in the cytoplasm. Its subcellular location is the cytoskeleton. It is found in the microtubule organizing center. The protein localises to the centrosome. It localises to the cytoplasmic vesicle membrane. The protein resides in the nucleus. Its subcellular location is the cell membrane. It is found in the mitochondrion. The protein localises to the cell junction. It localises to the endoplasmic reticulum membrane. The catalysed reaction is chloride(in) = chloride(out). It carries out the reaction thiocyanate(in) = thiocyanate(out). It catalyses the reaction nitrate(in) = nitrate(out). The enzyme catalyses iodide(out) = iodide(in). The catalysed reaction is bromide(in) = bromide(out). It carries out the reaction fluoride(in) = fluoride(out). It catalyses the reaction choline(out) = choline(in). Channel activity is redox- and pH-regulated. Anion vs cation selectivity is enhanced when fully oxidized. Its function is as follows. In the soluble state, catalyzes glutaredoxin-like thiol disulfide exchange reactions with reduced glutathione as electron donor. Can insert into membranes and form voltage-dependent multi-ion conductive channels. Membrane insertion seems to be redox-regulated and may occur only under oxidizing conditions. Has alternate cellular functions like a potential role in angiogenesis or in maintaining apical-basolateral membrane polarity during mitosis and cytokinesis. Could also promote endothelial cell proliferation and regulate endothelial morphogenesis (tubulogenesis). Promotes cell-surface expression of HRH3. The sequence is that of Chloride intracellular channel protein 4 (Clic4) from Rattus norvegicus (Rat).